The sequence spans 354 residues: Protein RecA (354 aa).

Position 65–72 (65–72 (GPESSGKT)) interacts with ATP.

Belongs to the RecA family.

Its subcellular location is the cytoplasm. Its function is as follows. Can catalyze the hydrolysis of ATP in the presence of single-stranded DNA, the ATP-dependent uptake of single-stranded DNA by duplex DNA, and the ATP-dependent hybridization of homologous single-stranded DNAs. It interacts with LexA causing its activation and leading to its autocatalytic cleavage. The sequence is that of Protein RecA from Pseudomonas syringae pv. syringae (strain B728a).